Consider the following 255-residue polypeptide: tRNA (guanine-N(1)-)-methyltransferase (255 aa).

Residues Gly121 and 141 to 146 each bind S-adenosyl-L-methionine; that span reads IGDYVL. Residues 236-255 form a disordered region; it reads PVKAPNRAGRQKTPKNKTDG. Over residues 244–255 the composition is skewed to basic residues; the sequence is GRQKTPKNKTDG.

It belongs to the RNA methyltransferase TrmD family. Homodimer.

It localises to the cytoplasm. It carries out the reaction guanosine(37) in tRNA + S-adenosyl-L-methionine = N(1)-methylguanosine(37) in tRNA + S-adenosyl-L-homocysteine + H(+). In terms of biological role, specifically methylates guanosine-37 in various tRNAs. The polypeptide is tRNA (guanine-N(1)-)-methyltransferase (Bradyrhizobium diazoefficiens (strain JCM 10833 / BCRC 13528 / IAM 13628 / NBRC 14792 / USDA 110)).